Here is a 921-residue protein sequence, read N- to C-terminus: Isoleucine--tRNA ligase (921 aa).

The 'HIGH' region motif lies at 57–67; it reads PYANGDIHMGH. Position 552 (Glu-552) interacts with L-isoleucyl-5'-AMP. The 'KMSKS' region signature appears at 593–597; that stretch reads KMSKS. Residue Lys-596 participates in ATP binding. The Zn(2+) site is built by Cys-888, Cys-891, Cys-908, and Cys-911.

It belongs to the class-I aminoacyl-tRNA synthetase family. IleS type 1 subfamily. In terms of assembly, monomer. Zn(2+) serves as cofactor.

The protein resides in the cytoplasm. It catalyses the reaction tRNA(Ile) + L-isoleucine + ATP = L-isoleucyl-tRNA(Ile) + AMP + diphosphate. Its function is as follows. Catalyzes the attachment of isoleucine to tRNA(Ile). As IleRS can inadvertently accommodate and process structurally similar amino acids such as valine, to avoid such errors it has two additional distinct tRNA(Ile)-dependent editing activities. One activity is designated as 'pretransfer' editing and involves the hydrolysis of activated Val-AMP. The other activity is designated 'posttransfer' editing and involves deacylation of mischarged Val-tRNA(Ile). This chain is Isoleucine--tRNA ligase, found in Bacillus anthracis (strain A0248).